A 587-amino-acid polypeptide reads, in one-letter code: MSFEISREQYAGMFGPTTGDSIRLGDTNLFAKIEKDMTVYGDESKFGGGKCLRDGMGQSATELRRDNPKVVDLIITSAVILDYTGIYKADIGIRDGKIVAIGNGGNPSIMDNVDFIVGSSTEALSGEGLIVTAGGIDTHVHFITPAIAYSALENGTTTIIGGGTGPADGTNSATSTPGAWNIHQMLRAAEGMPVNMGIQGKAGGAIMDTTAEQIEAGAMALKVHEDWGATLSCIDHALETADKYDVQVSLHSDTLNETGFVEDTIKSIGGRCIHSYHTEGAGGGHAPDLMKVASKNNIIPSSTSPTNPYTVDILPEHLDMLMVCHHLDPKIPEDVRFADSRIRKQTIAAEDVLQDMGALSIMSSDTMAMGRIGEVIMRSWQLADKMKKQRGPLEGDSEYIDNNRIKRYISKYTINPAIAEGISDYVGSIEEGKYADLVLWEPAMFGAKPKMILKSGMIAYGVMGDSNASIPTTQPRTMRELFGLTGKSRQHVNMTFVSTYAYEHNIKEELGLERNVLPVHNVRTVTKKDMKFNSETPKIEIDPLTYDVTVDGKLITCDPARELPLAQRYLYTNLDKINILVYYKKIT.

A Urease domain is found at 134–572; it reads GGIDTHVHFI…LPLAQRYLYT (439 aa). Ni(2+)-binding residues include His139, His141, and Lys222. N6-carboxylysine is present on Lys222. His224 contacts substrate. The Ni(2+) site is built by His251 and His277. Catalysis depends on His325, which acts as the Proton donor. Asp365 serves as a coordination point for Ni(2+).

This sequence belongs to the metallo-dependent hydrolases superfamily. Urease alpha subunit family. In terms of assembly, heterotrimer of UreA (gamma), UreB (beta) and UreC (alpha) subunits. Three heterotrimers associate to form the active enzyme. The cofactor is Ni cation. Post-translationally, carboxylation allows a single lysine to coordinate two nickel ions.

The protein localises to the cytoplasm. The catalysed reaction is urea + 2 H2O + H(+) = hydrogencarbonate + 2 NH4(+). The protein operates within nitrogen metabolism; urea degradation; CO(2) and NH(3) from urea (urease route): step 1/1. This Clostridium perfringens protein is Urease subunit alpha.